The chain runs to 232 residues: Triosephosphate isomerase (232 aa).

6–8 (NFK) provides a ligand contact to substrate. The active-site Electrophile is the histidine 90. The active-site Proton acceptor is the glutamate 159. Glycine 165 and serine 195 together coordinate substrate.

Belongs to the triosephosphate isomerase family. Homodimer.

Its subcellular location is the cytoplasm. It catalyses the reaction D-glyceraldehyde 3-phosphate = dihydroxyacetone phosphate. Its pathway is carbohydrate biosynthesis; gluconeogenesis. The protein operates within carbohydrate degradation; glycolysis; D-glyceraldehyde 3-phosphate from glycerone phosphate: step 1/1. Involved in the gluconeogenesis. Catalyzes stereospecifically the conversion of dihydroxyacetone phosphate (DHAP) to D-glyceraldehyde-3-phosphate (G3P). The protein is Triosephosphate isomerase of Wolinella succinogenes (strain ATCC 29543 / DSM 1740 / CCUG 13145 / JCM 31913 / LMG 7466 / NCTC 11488 / FDC 602W) (Vibrio succinogenes).